Reading from the N-terminus, the 1305-residue chain is MASPVNQQLLHHTEVRCDGSGDGSSVTVRINRQHHQAPSRRCKYSISSSCSSGESGVKKTGGSGGARRQKKLPQLFERSTSNWWNPKFDSNNLEEACVERCFPQTQRRFRYALMYLSVAGLLWSIYFSVHMKTKLVSHLVPTLCFLIVCLGFFFFTFTKSYARHCTAISLLVTLLVFTLTLASQFQVLNPGLGSDSLSNLTSFSATGSSSCLSQVGSFSICVEVLLLLYTVMHLPLYLSACLGVAYSILFETFGYHFRDESCFVLLVGRMAHWELLSKALLHVCIHAIGVHLFIMSEVRSRSTFLKVGQSIMHGKDLEVEKALKERMIHSVMPRIIADDLMKQGDDESENSVKRHSASSPKSRKKKSSIQKTPIIFRPFKMQRIEQVSILFADIVGFTKMSANKSAHALVGLLNDLFGRFDRLCEETKCEKISTLGDCYYCVAGCPEPRPDHAYCCIEMGLGMIEAIDQFCQEKKEMVNMRVGVHTGTVLCGILGMRRFKFDVWSNDVNLANLMEQLGVAGKVHISEKTARYLDDRYLMEDSMVVERLGQIVAADQLKGLKTFLISGGRTRVPSCSCSQTLIPVQEGTDLSSPSLAPHVQAAISETSDSHTNCTQPETLKSCPSCGETAARDGPEEGVSAANGGGEEWKGGAPRPSAIGASLKDPERSPESSTGDTLTNSQASLYDMLQEKGRWCGVSMDQSALLPLRFKNIREKTDAHFVEVIKEDSLMKDYFFKPPINPLSLNFLDKELETSYRASYQEEVIRMAPVKTFASATFSSLQDVLLNYFIFVLLSVACLLKPGTNTVSPPTLALVLLSVCGLLGFLSLLVSVRMAFYLEDMLLCTRRLLEIISGWVPRHFIGTVLVCLPAAVIFSYLSSDFYTDIHYTMFLCSALLIPMVQYCNFCQLSSSALLLATITGATMLILIYLPLCPQRPPLDPGTDIEANLSTSNSSYETLDNPRTELPFTRLGQEIAVAYFLLLLLVWFLNREFDVSYRLHYHGDVEADLHRTKIQSMRDQADWLLRNIIPYHVAEQLKVSQSYSKNHDDAGVIFASIVNFSEFYEENYEGGKECYRALNELIGDFDELLSKPHYSCIEKIKTIGATYMAASGLNPSQCQDSSQPHRHLQTLFEFAKEMMSVVDEFNNNMLWFNFKLRIGFNHGPLTAGVIGTTKLLYDIWGDTVNIASRMDTTGVECRIQASEESYRVLVKMGYDFDYRGTVNVKGKGQMKTYHFPKCTDNGGLVPHHQLCISPDIRVQVDGSIGRSPTDEISSLVTGGKGAVELGSGEAERKREKAEERGRDGGAR.

At methionine 1 to arginine 110 the chain is on the cytoplasmic side. Positions isoleucine 46–serine 55 are enriched in low complexity. Positions isoleucine 46–lysine 71 are disordered. A helical transmembrane segment spans residues tyrosine 111–methionine 131. Topologically, residues lysine 132 to lysine 134 are extracellular. The chain crosses the membrane as a helical span at residues leucine 135 to phenylalanine 155. The Cytoplasmic segment spans residues threonine 156–histidine 164. The chain crosses the membrane as a helical span at residues cysteine 165–phenylalanine 185. Over glutamine 186–serine 209 the chain is Extracellular. N-linked (GlcNAc...) asparagine glycosylation occurs at asparagine 199. A helical transmembrane segment spans residues serine 210–tyrosine 229. Over threonine 230–proline 235 the chain is Cytoplasmic. A helical membrane pass occupies residues leucine 236–phenylalanine 253. Over glycine 254 to glutamate 274 the chain is Extracellular. The helical transmembrane segment at leucine 275–methionine 295 threads the bilayer. The Cytoplasmic portion of the chain corresponds to serine 296–serine 778. The interval glutamine 343–isoleucine 369 is disordered. The segment covering lysine 353 to serine 368 has biased composition (basic residues). The Mg(2+) site is built by aspartate 393, isoleucine 394, and aspartate 437. ATP contacts are provided by residues aspartate 393–threonine 398, leucine 435–aspartate 437, and arginine 481. Polar residues-rich tracts occupy residues serine 607 to threonine 618 and glutamate 670 to serine 680. The tract at residues serine 607–serine 680 is disordered. The chain crosses the membrane as a helical span at residues serine 779 to leucine 799. Over lysine 800–threonine 810 the chain is Extracellular. The chain crosses the membrane as a helical span at residues leucine 811 to valine 831. The Cytoplasmic segment spans residues arginine 832–phenylalanine 859. A helical transmembrane segment spans residues isoleucine 860–phenylalanine 880. Residues tyrosine 881–aspartate 883 are Extracellular-facing. A helical membrane pass occupies residues isoleucine 884–phenylalanine 904. At cysteine 905 to alanine 911 the chain is on the cytoplasmic side. Residues leucine 912–proline 932 traverse the membrane as a helical segment. At glutamine 933–phenylalanine 966 the chain is on the extracellular side. N-linked (GlcNAc...) asparagine glycans are attached at residues asparagine 946 and asparagine 951. The helical transmembrane segment at threonine 967 to leucine 987 threads the bilayer. Over asparagine 988 to arginine 1305 the chain is Cytoplasmic. ATP-binding positions include lysine 1099, aspartate 1176–tryptophan 1178, asparagine 1183–arginine 1187, and lysine 1223. Residues serine 1261–arginine 1305 form a disordered region. Basic and acidic residues predominate over residues glutamate 1287–arginine 1305.

Belongs to the adenylyl cyclase class-4/guanylyl cyclase family. The cofactor is Mg(2+). Mn(2+) is required as a cofactor. In terms of tissue distribution, detected in oocytes.

Its subcellular location is the cell membrane. The enzyme catalyses ATP = 3',5'-cyclic AMP + diphosphate. In terms of biological role, adenylyl cyclase that catalyzes the formation of the signaling molecule cAMP in response to activation of G protein-coupled receptors. This Xenopus laevis (African clawed frog) protein is Adenylate cyclase type 9 (adcy9).